Here is a 73-residue protein sequence, read N- to C-terminus: Excelsatoxin A (73 aa).

The N-terminal stretch at 1-20 (MRFALVAAITIALLVAGSVA) is a signal peptide. Positions 21-37 (DESSEDIDNIVIKTPLD) are excised as a propeptide. Disulfide bonds link C41/C58, C46/C60, and C54/C69.

This sequence belongs to the gympietide family. In terms of tissue distribution, expressed in trichomes, that are stiff epidermal hairs located on the surface of petioles and leaves. Not expressed in other aerial parts.

The protein localises to the secreted. Functionally, neurotoxin certainly responsible for the defensive, persistent, and painful stings of the giant stinging tree. Inhibits inactivation of Nav1.7/SCN9A sodium channel in sensory neurons by directly interacting with TMEM233, a newly described Nav-interacting protein. Has virtually no effect on Nav1.7/SCN9A function in heterologous expression systems and in neurons that do not express TMEM233. Also weakly but significantly affects Nav1.8/SCN10A. Coexpression of TMEM233 with Nav also confers ExTxA sensitivity to Nav1.1-Nav1.6. On the Nav1.7/SCN9A channel, causes a significant hyperpolarizing shift in the voltage dependence of activation. Its effects on Nav currents are irreversible, with no apparent reduction in activity even after repeated wash steps over 30 minutes. Does not show activity on Nav1.9/SCN11A. Does not show insecticidal activities. In vivo, induces nocifensive behavior in mice (licking or biting and shaking or lifting of the affected paw) lasting for approximately 1 hour. This Dendrocnide excelsa (Giant stinging tree) protein is Excelsatoxin A.